A 236-amino-acid chain; its full sequence is MKNVMKLSVIALLTAAAVPAMAGKTEPYTQSGTNAREMLQEQAIHWISVDQIKQSLEGKAPINVSFDIDDTVMLFSSPCFYHGQQKFSPGKHDYLKNQDFWNEVNAGCDKYSIPKQIAIDLINMHQARGDQVYFFTGRTAGKVDGVTPILEKTFNIKNMHPVEFMGSRERTTKYNKTPAIISHKVSIHYGDSDDDVLAAKEAGVRGIRLMRAANSTYQPMPTLGGYGEEVLINSSY.

An N-terminal signal peptide occupies residues 1-22; sequence MKNVMKLSVIALLTAAAVPAMA. D67 acts as the Nucleophile in catalysis. Mg(2+) contacts are provided by D67 and D69. D69 serves as the catalytic Proton donor. Substrate contacts are provided by residues 136–137 and K176; that span reads TG. D191 is a Mg(2+) binding site.

It belongs to the class B bacterial acid phosphatase family. Homotetramer. Mg(2+) serves as cofactor.

The protein localises to the periplasm. It catalyses the reaction a phosphate monoester + H2O = an alcohol + phosphate. In terms of biological role, dephosphorylates several organic phosphate monoesters. Also has a phosphotransferase activity catalyzing the transfer of low-energy phosphate groups from organic phosphate monoesters to free hydroxyl groups of various organic compounds. This Haemophilus influenzae (strain ATCC 51907 / DSM 11121 / KW20 / Rd) protein is Class B acid phosphatase (aphA).